The primary structure comprises 372 residues: Carbamoyl phosphate synthase small chain (372 aa).

The interval 1–182 (MTLYCKRGYK…PKAPIVHLGN (182 aa)) is CPSase. Positions 53, 234, and 236 each coordinate L-glutamine. A Glutamine amidotransferase type-1 domain is found at 186-372 (TIVVVDCGVK…KFKKMVSRNA (187 aa)). Residue cysteine 262 is the Nucleophile of the active site. Positions 263, 266, 304, 306, and 307 each coordinate L-glutamine. Residues histidine 347 and glutamate 349 contribute to the active site.

Belongs to the CarA family. As to quaternary structure, composed of two chains; the small (or glutamine) chain promotes the hydrolysis of glutamine to ammonia, which is used by the large (or ammonia) chain to synthesize carbamoyl phosphate. Tetramer of heterodimers (alpha,beta)4.

The enzyme catalyses hydrogencarbonate + L-glutamine + 2 ATP + H2O = carbamoyl phosphate + L-glutamate + 2 ADP + phosphate + 2 H(+). It carries out the reaction L-glutamine + H2O = L-glutamate + NH4(+). Its pathway is amino-acid biosynthesis; L-arginine biosynthesis; carbamoyl phosphate from bicarbonate: step 1/1. The protein operates within pyrimidine metabolism; UMP biosynthesis via de novo pathway; (S)-dihydroorotate from bicarbonate: step 1/3. Small subunit of the glutamine-dependent carbamoyl phosphate synthetase (CPSase). CPSase catalyzes the formation of carbamoyl phosphate from the ammonia moiety of glutamine, carbonate, and phosphate donated by ATP, constituting the first step of 2 biosynthetic pathways, one leading to arginine and/or urea and the other to pyrimidine nucleotides. The small subunit (glutamine amidotransferase) binds and cleaves glutamine to supply the large subunit with the substrate ammonia. In Sulfurisphaera tokodaii (strain DSM 16993 / JCM 10545 / NBRC 100140 / 7) (Sulfolobus tokodaii), this protein is Carbamoyl phosphate synthase small chain.